The chain runs to 642 residues: 1-deoxy-D-xylulose-5-phosphate synthase (642 aa).

Thiamine diphosphate-binding positions include H73 and 114 to 116; that span reads SHA. D145 provides a ligand contact to Mg(2+). Thiamine diphosphate is bound by residues 146 to 147, N175, F286, and E367; that span reads GA. N175 contributes to the Mg(2+) binding site.

It belongs to the transketolase family. DXPS subfamily. Homodimer. Mg(2+) is required as a cofactor. The cofactor is thiamine diphosphate.

The enzyme catalyses D-glyceraldehyde 3-phosphate + pyruvate + H(+) = 1-deoxy-D-xylulose 5-phosphate + CO2. It functions in the pathway metabolic intermediate biosynthesis; 1-deoxy-D-xylulose 5-phosphate biosynthesis; 1-deoxy-D-xylulose 5-phosphate from D-glyceraldehyde 3-phosphate and pyruvate: step 1/1. In terms of biological role, catalyzes the acyloin condensation reaction between C atoms 2 and 3 of pyruvate and glyceraldehyde 3-phosphate to yield 1-deoxy-D-xylulose-5-phosphate (DXP). This Saccharopolyspora erythraea (strain ATCC 11635 / DSM 40517 / JCM 4748 / NBRC 13426 / NCIMB 8594 / NRRL 2338) protein is 1-deoxy-D-xylulose-5-phosphate synthase.